The following is a 132-amino-acid chain: Small ribosomal subunit protein uS8 (132 aa).

The protein belongs to the universal ribosomal protein uS8 family. In terms of assembly, part of the 30S ribosomal subunit. Contacts proteins S5 and S12.

Functionally, one of the primary rRNA binding proteins, it binds directly to 16S rRNA central domain where it helps coordinate assembly of the platform of the 30S subunit. The sequence is that of Small ribosomal subunit protein uS8 from Borrelia turicatae (strain 91E135).